Here is a 157-residue protein sequence, read N- to C-terminus: Transcriptional regulator MraZ (157 aa).

SpoVT-AbrB domains follow at residues 7 to 52 (TYTM…AGGN) and 83 to 126 (SETL…EPER).

It belongs to the MraZ family. As to quaternary structure, forms oligomers.

The protein localises to the cytoplasm. Its subcellular location is the nucleoid. In Xanthobacter autotrophicus (strain ATCC BAA-1158 / Py2), this protein is Transcriptional regulator MraZ.